A 592-amino-acid polypeptide reads, in one-letter code: MTARGKIVWVSGPAVKADGMSEAKMYETVTVGEARLIGEVIRLTGDVAFIQVYESTSGLKPGEPVEGTGNPLSVLLGPGIIGQIYDGIQRPLKELSKKSGSFIGRGITTSPVDMTKKYHFVPSVSVGDDVIPGTVIGTVKETDLIDHSIMVPPDHAGGKIKSIVSEGEYDLETEMAGIEKDGKTIPLKMYHRWPVRQPRSYHTKYDPTVPLITGQRVIDTFFPIAKGGTGSIPGGFGTGKTVTLHQIAKWADSQVVVYIGCGERGNEMTEVLVEFPHLKDPRTDKPLMDRTVLVANTSNMPVAAREASIYTGVTIAEYYRDMGKDVVLVADSTSRWAEALREMSGRLEEMPAEEGYPSYLASRLAEFYERAGRVRALGSPERNGSVTLVGAVSPSGGDFTEPVTTHTMRFIKTFWALDAKLAYSRHYPSINWMNSYSGYLADIAKWWGENVSKDWLDTRSEAYGILQREDTLKEIVRLLGPEALPDEEKLILEVARMMKIGLLQQNSFDDVDTYCSPEKQYKLLKMQVDFYKRGQQALKEGAELADIRAMPVISGLLKAKMDIKDDEMPKLDELAGAMDEQYKGITGVKVAS.

234-241 serves as a coordination point for ATP; sequence GGFGTGKT.

It belongs to the ATPase alpha/beta chains family. As to quaternary structure, has multiple subunits with at least A(3), B(3), C, D, E, F, H, I and proteolipid K(x).

It is found in the cell membrane. The enzyme catalyses ATP + H2O + 4 H(+)(in) = ADP + phosphate + 5 H(+)(out). In terms of biological role, component of the A-type ATP synthase that produces ATP from ADP in the presence of a proton gradient across the membrane. The A chain is the catalytic subunit. This Cenarchaeum symbiosum (strain A) protein is A-type ATP synthase subunit A.